Consider the following 274-residue polypeptide: Nitrate import ATP-binding protein NrtD (274 aa).

In terms of domain architecture, ABC transporter spans L17 to E250. G53 to S60 is a binding site for ATP.

It belongs to the ABC transporter superfamily. Nitrate/nitrite/cyanate uptake transporter (NitT) (TC 3.A.1.16) family. As to quaternary structure, the complex is composed of two ATP-binding proteins (NrtC and NrtD), two transmembrane proteins (NrtB) and a solute-binding protein (NrtA).

The protein localises to the cell inner membrane. It catalyses the reaction nitrate(out) + ATP + H2O = nitrate(in) + ADP + phosphate + H(+). Part of the ABC transporter complex NrtABCD involved in nitrate uptake. The complex is probably also involved in nitrite transport. Probably responsible for energy coupling to the transport system. The sequence is that of Nitrate import ATP-binding protein NrtD from Synechococcus elongatus (strain ATCC 33912 / PCC 7942 / FACHB-805) (Anacystis nidulans R2).